Here is an 895-residue protein sequence, read N- to C-terminus: Putative endoplasmic reticulum metallopeptidase 1-B (895 aa).

The disordered stretch occupies residues 1-27 (MSTGIRRRHADEKKNILEKESLQNDET). At 1-39 (MSTGIRRRHADEKKNILEKESLQNDETQREMEKDISLLR) the chain is on the cytoplasmic side. A compositionally biased stretch (basic and acidic residues) spans 9–27 (HADEKKNILEKESLQNDET). The chain crosses the membrane as a helical span at residues 40–60 (PAHWNFIGLFFLVLIIGTTFL). Residues 61–374 (HKCLPEPKDP…KPAEYADRKT (314 aa)) are Lumenal-facing. Asparagine 156 carries an N-linked (GlcNAc...) asparagine glycan. Positions 180 and 192 each coordinate Zn(2+). Glutamate 226 serves as the catalytic Proton acceptor. Positions 227, 253, and 329 each coordinate Zn(2+). The chain crosses the membrane as a helical span at residues 375–395 (VFFDFLGLFVIIYPLSIAHLV). Residues 396 to 424 (NMLTICTVIALMSHRFYSKTFITFLALRD) are Cytoplasmic-facing. Residues 425–445 (YVLTILTIALVLKAMTFMSLF) form a helical membrane-spanning segment. At 446 to 457 (TYGALRWYTRHW) the chain is on the lumenal side. The chain crosses the membrane as a helical span at residues 458 to 478 (LALVAYGLPSVWAGISVQGLL). Residues 479-489 (TARLAPKAREE) are Cytoplasmic-facing. Residues 490–512 (YGSTLELIHLTLISGILLAFTYY) traverse the membrane as a helical segment. Over 513–515 (DIA) the chain is Lumenal. Residues 516–538 (SGFLFALLLVPAIKSIITYFGAW) traverse the membrane as a helical segment. Residues 539–553 (PTCPTFNTILTLILS) are Cytoplasmic-facing. Residues 554–574 (FPGCAMAIYTTEMLLSIFIPI) traverse the membrane as a helical segment. Topologically, residues 575–584 (MGRSSYNPEP) are lumenal. A helical transmembrane segment spans residues 585-605 (AVSFFVAFSAGCIVLSLGGLV). Residues 606–619 (AKSRNSRSSNEAGL) are Cytoplasmic-facing. A helical transmembrane segment spans residues 620 to 640 (LELIYNILGVLLVTLTILYVF). Topologically, residues 641–895 (SSFWPSPYRF…WNVDQVYKYF (255 aa)) are lumenal. Residues asparagine 679 and asparagine 796 are each glycosylated (N-linked (GlcNAc...) asparagine).

This sequence belongs to the peptidase M28 family. Requires Zn(2+) as cofactor.

It localises to the endoplasmic reticulum membrane. This is Putative endoplasmic reticulum metallopeptidase 1-B from Caenorhabditis elegans.